Reading from the N-terminus, the 139-residue chain is Endoribonuclease YbeY (139 aa).

Positions 105, 109, and 115 each coordinate Zn(2+).

This sequence belongs to the endoribonuclease YbeY family. Zn(2+) is required as a cofactor.

The protein localises to the cytoplasm. Single strand-specific metallo-endoribonuclease involved in late-stage 70S ribosome quality control and in maturation of the 3' terminus of the 16S rRNA. The protein is Endoribonuclease YbeY of Flavobacterium johnsoniae (strain ATCC 17061 / DSM 2064 / JCM 8514 / BCRC 14874 / CCUG 350202 / NBRC 14942 / NCIMB 11054 / UW101) (Cytophaga johnsonae).